A 471-amino-acid chain; its full sequence is MDTSSVTMHTERACCHQAQRAVAAMLDKAPSWLIWTAVLYVGLPFMLYWAVPYLFYHNKTKSRRIAIYVLGDLGHSPRICYHARSFSAAGWEVELCGYLEEQPPKDLLDDPRVTIRALPGASNAGKSLGQTARKVVLQTCHIVRQLWELRGCDYILIQNPPSIPLLPIVAIFKVLTRTRLILDWHNFAYTVLQLRVGRFLHPLVLVSYAVEFLFSRMADYHITVTAAMKDYLVQSFLLPARRIAVMYDRPGEQFRPLPAGERGAALAEPFIRGYIPAGFDVQRGDTILVTSTSFTLDEDINVLFGALKIYESAAAKFDTTLPRILLFVTGKGPLKGKYMEEVRNYKWERCTIHFLWLSAEDYPRLLQLCDFGVSLHTSTSGLDLPMKVLDMFGSGLPAFVMDYPAIGELVQDRVNGLRFTTRRELEQCLIFAIKDEHTRKVLKENALLESKNRWHQSWASAMSELQVVRQS.

The Lumenal portion of the chain corresponds to 1–31; sequence MDTSSVTMHTERACCHQAQRAVAAMLDKAPS. The chain crosses the membrane as a helical span at residues 32–52; the sequence is WLIWTAVLYVGLPFMLYWAVP. Topologically, residues 53 to 126 are cytoplasmic; sequence YLFYHNKTKS…ALPGASNAGK (74 aa). Positions 127–147 form an intramembrane region, helical; the sequence is SLGQTARKVVLQTCHIVRQLW. Residues 148 to 471 are Cytoplasmic-facing; sequence ELRGCDYILI…MSELQVVRQS (324 aa).

It belongs to the glycosyltransferase group 1 family.

It is found in the endoplasmic reticulum membrane. The enzyme catalyses an N,N'-diacetylchitobiosyl-diphospho-di-trans,poly-cis-dolichol + GDP-alpha-D-mannose = a beta-D-Man-(1-&gt;4)-beta-D-GlcNAc-(1-&gt;4)-alpha-D-GlcNAc-diphospho-di-trans,poly-cis-dolichol + GDP + H(+). It functions in the pathway protein modification; protein glycosylation. In terms of biological role, participates in the formation of the lipid-linked precursor oligosaccharide for N-glycosylation. Involved in assembling the dolichol-pyrophosphate-GlcNAc(2)-Man(5) intermediate on the cytoplasmic surface of the ER. The polypeptide is Chitobiosyldiphosphodolichol beta-mannosyltransferase (ALG1) (Eremothecium gossypii (strain ATCC 10895 / CBS 109.51 / FGSC 9923 / NRRL Y-1056) (Yeast)).